We begin with the raw amino-acid sequence, 341 residues long: HTH-type transcriptional repressor PurR (341 aa).

An HTH lacI-type domain is found at 2–56 (ATIKDVAKRAGVSTTTVSHVINKTRFVAEETKAAVRAAIKELHYSPSAVARSLKV). Positions 4 to 23 (IKDVAKRAGVSTTTVSHVIN) form a DNA-binding region, H-T-H motif. A DNA-binding region spans residues 48 to 56 (SAVARSLKV). Residues Tyr-73, Arg-190, Thr-192, Phe-221, and Asp-275 each contribute to the hypoxanthine site.

In terms of assembly, homodimer.

The protein operates within purine metabolism; purine nucleotide biosynthesis [regulation]. Its function is as follows. Is the main repressor of the genes involved in the de novo synthesis of purine nucleotides, regulating purB, purC, purEK, purF, purHD, purL, purMN and guaBA expression. PurR is allosterically activated to bind its cognate DNA by binding the purine corepressors, hypoxanthine or guanine, thereby effecting transcription repression. The sequence is that of HTH-type transcriptional repressor PurR from Pectobacterium atrosepticum (strain SCRI 1043 / ATCC BAA-672) (Erwinia carotovora subsp. atroseptica).